The chain runs to 408 residues: MYDILQPELWVKIIDYSGEINLLLTDKNFFELFNLIDTKVDVVEYIVKNNLIDALKYFILLKKLRHPIMEKNIVTIKSLNKCLIKSCKKNKLNIIKYLVSLGADIKAGDDCAVQLASQNGHLEVIEYLVAQGANIRADNDYAVIWASRNGYLDIVKYLVSQGADIRANNDYAVRWASRNGHLKVVKYLVSLGANIRTENDYAIKYASENGYLRIVEYLVSQGADIRADNDYAVGLASSNGHFEVVEYLVSQGANIRVDNDYAVRLASSNGHLEVVKYLVSLRANIRARCDFAIKWSSSNGHLEVVKYLVSQGADIRSQNDYAVRYASTNGHLEVVKYLVGQGADIRTGDDYAVRWASRGGCLEVVKYLVDQGANIRAKDDYAVKWASEKGHLEIVKFLISQGAVLTKN.

ANK repeat units follow at residues 78-107 (SLNK…DIKA), 108-137 (GDDC…NIRA), 139-167 (NDYA…DIRA), 168-197 (NNDY…NIRT), 198-227 (ENDY…DIRA), 229-257 (NDYA…NIRV), 259-287 (NDYA…NIRA), 288-317 (RCDF…DIRS), 318-347 (QNDY…DIRT), 349-377 (DDYA…NIRA), and 378-407 (KDDY…VLTK).

The protein is Putative ankyrin repeat protein L483 of Acanthamoeba polyphaga (Amoeba).